The chain runs to 142 residues: Large ribosomal subunit protein uL11 (142 aa).

It belongs to the universal ribosomal protein uL11 family. In terms of assembly, part of the ribosomal stalk of the 50S ribosomal subunit. Interacts with L10 and the large rRNA to form the base of the stalk. L10 forms an elongated spine to which L12 dimers bind in a sequential fashion forming a multimeric L10(L12)X complex. In terms of processing, one or more lysine residues are methylated.

Its function is as follows. Forms part of the ribosomal stalk which helps the ribosome interact with GTP-bound translation factors. This chain is Large ribosomal subunit protein uL11, found in Tolumonas auensis (strain DSM 9187 / NBRC 110442 / TA 4).